The sequence spans 959 residues: Kinesin-like protein NACK1 (959 aa).

The disordered stretch occupies residues 1–28; that stretch reads MTVRTPGTPASKIDKTPATTPNGHRGRE. The 324-residue stretch at 30 to 353 folds into the Kinesin motor domain; sequence KIVVTVRLRP…LYFATRAKEV (324 aa). Residue 117 to 124 coordinates ATP; sequence GQTSSGKT. The residue at position 145 (T145) is a Phosphothreonine. Residues 362–429 adopt a coiled-coil conformation; it reads VVSDKQLVKH…LRRKLQEEQG (68 aa). 4 disordered regions span residues 417–438, 451–473, 598–640, and 658–700; these read VDELRRKLQEEQGPKPSESVSP, SPNLEEKAPVRSERTRNTMGRQS, LPSN…FLKS, and NRAP…SVNM. Composition is skewed to basic and acidic residues over residues 418–429 and 454–466; these read DELRRKLQEEQG and LEEKAPVRSERTR. Positions 557 to 598 form a coiled coil; it reads KSVSANLKEEIARLHSQGSTIADLEEQLENVQKSLDKLVMSL. A compositionally biased stretch (low complexity) spans 600 to 611; sequence SNNDQQSNNDTT. Over residues 613–623 the composition is skewed to basic residues; it reads KAKHPSKKKKL. Residues 630–640 show a composition bias toward polar residues; that stretch reads NSINRQNFLKS. Residues T675 and T690 each carry the phosphothreonine modification. The interval 685 to 756 is required for the binding to NPK1; the sequence is SSKEGTPYRR…EANEAAGYNL (72 aa).

Belongs to the TRAFAC class myosin-kinesin ATPase superfamily. Kinesin family. KIN-7 subfamily. In terms of assembly, interacts (via C-terminus) with NPK1 (via C-terminus). Post-translationally, phosphorylated at Thr-145, Thr-675 and Thr-690 by CDKAs and CDKBs. The phosphorylation occurs before metaphase and inhibits the interaction with NPK1 preventing the transition to cytokinesis.

It localises to the cytoplasm. The protein resides in the nucleus. The protein localises to the cytoskeleton. Its subcellular location is the phragmoplast. Functionally, probable plus end-directed motor protein that functions in the NACK-PQR (NPK1-NQK1/MEK1-NRK1) MAP kinase signaling pathway, which is essential for somatic cell cytokinesis, especially for the cell-plate formation and its expansion. Regulates the activity and the localization of NPK1 by association through the non-catalytic region of the kinase. In Nicotiana tabacum (Common tobacco), this protein is Kinesin-like protein NACK1 (NACK1).